A 421-amino-acid polypeptide reads, in one-letter code: TITAN-like protein (421 aa).

The C2H2-type 1; degenerate zinc finger occupies 11 to 32 (EFCTVCRFHHDQGSRHKYFPRH). Residues 70–100 (VWCVFCDEDIVELGSSFACSKAINHFASSDH) form a C2H2-type 2; degenerate zinc finger. The interval 279 to 306 (ISSSHSTDAGGNVHSGAPPPWLDANDGD) is disordered. 2 consecutive short sequence motifs (nuclear localization signal) follow at residues 328–335 (NRKLNPNR) and 377–384 (TRKESRKE). The segment at 376 to 421 (GTRKESRKEFEKEKRKLVKTESISTESEPVKIQPYISKRARRESGE) is disordered. Positions 377 to 389 (TRKESRKEFEKEK) are enriched in basic and acidic residues.

As to expression, also present in cotyledons, hypocotyls, stems, veins of sepals and stigmas, and actively dividing tissues such as shoot apical meristem, root tips and emerging true leaves. Weak expression in petals and anthers, and not detected in mature leaves. In seeds, expressed in both the endosperm and embryo.

The protein resides in the nucleus. Key regulator for endosperm and embryo nuclear divisions. In Arabidopsis thaliana (Mouse-ear cress), this protein is TITAN-like protein.